The primary structure comprises 104 residues: Type IV secretion system protein PtlB homolog (104 aa).

A helical transmembrane segment spans residues 30–50 (IALLGIWFSIAFLALFPVALL).

This sequence belongs to the virB3 family.

The protein resides in the cell membrane. The sequence is that of Type IV secretion system protein PtlB homolog (ptlB) from Bordetella parapertussis (strain 12822 / ATCC BAA-587 / NCTC 13253).